We begin with the raw amino-acid sequence, 432 residues long: Trigger factor (432 aa).

Positions 161–246 (EDRVTIDFTG…LKKVEERELP (86 aa)) constitute a PPIase FKBP-type domain.

It belongs to the FKBP-type PPIase family. Tig subfamily. As to quaternary structure, homodimer and monomer. In vivo most of the ribosomes are in complex with monomeric TF. Uncomplexed TF, however, is in a monomer-dimer equilibrium with approximately two thirds of TF existing in a dimeric state.

Its subcellular location is the cytoplasm. It catalyses the reaction [protein]-peptidylproline (omega=180) = [protein]-peptidylproline (omega=0). Involved in protein export. Acts as a chaperone by maintaining the newly synthesized protein in an open conformation. Functions as a peptidyl-prolyl cis-trans isomerase. The chain is Trigger factor from Escherichia coli O139:H28 (strain E24377A / ETEC).